The sequence spans 1106 residues: Voltage-dependent calcium channel subunit alpha-2/delta-1 (1106 aa).

The signal sequence occupies residues 1 to 26 (MAAGRPLAWTLTLWQAWLILIGPSSE). At 27–1076 (EPFPSAVTIK…VLEDYTDCGG (1050 aa)) the chain is on the extracellular side. An N-linked (GlcNAc...) asparagine glycan is attached at Asn94. Ser121 is modified (phosphoserine). Asn138 and Asn186 each carry an N-linked (GlcNAc...) asparagine glycan. One can recognise a VWFA domain in the interval 255–432 (DMLILVDVSG…INTQEYLDVL (178 aa)). 3 residues coordinate a divalent metal cation: Asp261, Ser263, and Ser265. The short motif at 261–265 (DVSGS) is the MIDAS-like motif element. Residues Asn326 and Asn350 are each glycosylated (N-linked (GlcNAc...) asparagine). The cysteines at positions 406 and 1062 are disulfide-linked. The region spanning 448 to 539 (WTNVYLDALE…QPKPIGVGIP (92 aa)) is the Cache domain. 3 N-linked (GlcNAc...) asparagine glycosylation sites follow: Asn615, Asn784, and Asn891. Residues 1077–1097 (VSGLNPSLWSIIGIQFVLLWL) form a helical membrane-spanning segment. Residues 1098–1106 (VSGSRHCLL) are Cytoplasmic-facing.

The protein belongs to the calcium channel subunit alpha-2/delta family. As to quaternary structure, dimer formed of alpha-2-1 and delta-1 chains; disulfide-linked. Voltage-dependent calcium channels are multisubunit complexes, consisting of alpha-1 (CACNA1), alpha-2 (CACNA2D), beta (CACNB) and delta (CACNA2D) subunits in a 1:1:1:1 ratio. Proteolytically processed into subunits alpha-2-1 and delta-1 that are disulfide-linked. In terms of tissue distribution, skeletal muscle.

The protein resides in the membrane. The protein localises to the cell membrane. In terms of biological role, the alpha-2/delta subunit of voltage-dependent calcium channels regulates calcium current density and activation/inactivation kinetics of the calcium channel. Plays an important role in excitation-contraction coupling. This Oryctolagus cuniculus (Rabbit) protein is Voltage-dependent calcium channel subunit alpha-2/delta-1 (CACNA2D1).